Here is a 526-residue protein sequence, read N- to C-terminus: Serine/threonine-protein kinase ppk22 (526 aa).

Disordered regions lie at residues 1–24 (MARE…QSHF) and 39–106 (AATV…PRPL). Residues 10–23 (KSPSSTDDGMSQSH) show a composition bias toward polar residues. Low complexity predominate over residues 65–78 (NQLNELDLNDSSDQ). S154 is modified (phosphoserine). The region spanning 155–445 (FEKIRLLGQG…ASDIKQHPFF (291 aa)) is the Protein kinase domain. Residues 161–169 (LGQGDVGKV) and K184 contribute to the ATP site. D280 (proton acceptor) is an active-site residue. T339 carries the post-translational modification Phosphothreonine. S341 is subject to Phosphoserine. Y348 is subject to Phosphotyrosine. Residues 446–526 (RHIQWALLRS…SVTLHHAGDE (81 aa)) enclose the AGC-kinase C-terminal domain. The segment at 499–526 (MHSSTPVNEQSNPFDSFSSVTLHHAGDE) is disordered. The segment covering 500–519 (HSSTPVNEQSNPFDSFSSVT) has biased composition (polar residues).

The protein belongs to the protein kinase superfamily. AGC Ser/Thr protein kinase family.

It localises to the cytoplasm. The catalysed reaction is L-seryl-[protein] + ATP = O-phospho-L-seryl-[protein] + ADP + H(+). The enzyme catalyses L-threonyl-[protein] + ATP = O-phospho-L-threonyl-[protein] + ADP + H(+). The sequence is that of Serine/threonine-protein kinase ppk22 (ppk22) from Schizosaccharomyces pombe (strain 972 / ATCC 24843) (Fission yeast).